Reading from the N-terminus, the 355-residue chain is Apyrase apy-1 (355 aa).

The Cytoplasmic portion of the chain corresponds to 1-6; sequence MTQESN. The chain crosses the membrane as a helical; Signal-anchor for type II membrane protein span at residues 7-29; it reads SNFFNFLLFGFVTAIAFYSGTQF. Residue N30 is glycosylated (N-linked (GlcNAc...) asparagine). Over 30–355 the chain is Lumenal; the sequence is NKSSEQEEHI…PYKYEGIAFA (326 aa). S119, E166, and E235 together coordinate Ca(2+). Residue N291 is glycosylated (N-linked (GlcNAc...) asparagine). E350 provides a ligand contact to Ca(2+).

Belongs to the apyrase family. Ca(2+) is required as a cofactor.

The protein resides in the endomembrane system. It carries out the reaction a ribonucleoside 5'-diphosphate + H2O = a ribonucleoside 5'-phosphate + phosphate + H(+). Hydrolyzes UDP and to a lesser extent GDP. By preventing the accumulation of NDP, may promote the reglucosylation of incompletely folded glycoproteins in the endoplasmic reticulum following the unfolded protein response. This Caenorhabditis elegans protein is Apyrase apy-1.